The sequence spans 72 residues: Translation initiation factor IF-1 (72 aa).

An S1-like domain is found at 1-72 (MAKEDVIEIE…TRGRITYRFK (72 aa)).

This sequence belongs to the IF-1 family. As to quaternary structure, component of the 30S ribosomal translation pre-initiation complex which assembles on the 30S ribosome in the order IF-2 and IF-3, IF-1 and N-formylmethionyl-tRNA(fMet); mRNA recruitment can occur at any time during PIC assembly.

The protein localises to the cytoplasm. Its function is as follows. One of the essential components for the initiation of protein synthesis. Stabilizes the binding of IF-2 and IF-3 on the 30S subunit to which N-formylmethionyl-tRNA(fMet) subsequently binds. Helps modulate mRNA selection, yielding the 30S pre-initiation complex (PIC). Upon addition of the 50S ribosomal subunit IF-1, IF-2 and IF-3 are released leaving the mature 70S translation initiation complex. The sequence is that of Translation initiation factor IF-1 from Streptococcus suis (strain 05ZYH33).